Reading from the N-terminus, the 269-residue chain is MATH domain and coiled-coil domain-containing protein At2g01790 (269 aa).

The 129-residue stretch at 6–134 folds into the MATH domain; sequence AVKKLWVINN…NGEVDIVAEV (129 aa). Residues 228–269 are a coiled coil; that stretch reads KLDWLEKKLKETGKSRLQEIEEDLKDLKVKCADMDALLEFLR.

This is MATH domain and coiled-coil domain-containing protein At2g01790 from Arabidopsis thaliana (Mouse-ear cress).